We begin with the raw amino-acid sequence, 305 residues long: MVKPEKFIPKAIEKISQEIKEGKAIIALSGGVDSSVCAELAYRAIGDRLQPIYIDTGLMRKGETERIKHIFSHMNLHVVYAKDRFLEALAGVTDPEEKRKAVGETFIRVFEDEAKRIAADYLIQGTIYPDRIESEGGIKSHHNVGGLPSVMDFEKIVEPIEDLYKDEVREVAWALQLPEEICERMPFPGPGLAVRILGEVTEEKLEVVREANFIVEEELLERFCPWQTFAAVLGKGTGVKGDIRAYGWIVAVRAVGSRDGMTAEALELPWEVLKHLEARITSEIPKVARVVYDITPKPPATIEFE.

Residues 2–184 form the GMPS ATP-PPase domain; that stretch reads VKPEKFIPKA…LQLPEEICER (183 aa). 29–35 lines the ATP pocket; sequence SGGVDSS.

As to quaternary structure, heterodimer composed of a glutamine amidotransferase subunit (A) and a GMP-binding subunit (B).

The enzyme catalyses XMP + L-glutamine + ATP + H2O = GMP + L-glutamate + AMP + diphosphate + 2 H(+). It functions in the pathway purine metabolism; GMP biosynthesis; GMP from XMP (L-Gln route): step 1/1. In terms of biological role, catalyzes the synthesis of GMP from XMP. The sequence is that of GMP synthase [glutamine-hydrolyzing] subunit B (guaAB) from Methanosarcina acetivorans (strain ATCC 35395 / DSM 2834 / JCM 12185 / C2A).